The primary structure comprises 475 residues: Ribulose bisphosphate carboxylase large chain (475 aa).

Residues 1–2 constitute a propeptide that is removed on maturation; the sequence is MS. Proline 3 carries the N-acetylproline modification. An N6,N6,N6-trimethyllysine modification is found at lysine 14. Substrate is bound by residues asparagine 123 and threonine 173. The Proton acceptor role is filled by lysine 175. Lysine 177 contributes to the substrate binding site. Mg(2+)-binding residues include lysine 201, aspartate 203, and glutamate 204. At lysine 201 the chain carries N6-carboxylysine. Histidine 294 acts as the Proton acceptor in catalysis. Substrate is bound by residues arginine 295, histidine 327, and serine 379.

It belongs to the RuBisCO large chain family. Type I subfamily. Heterohexadecamer of 8 large chains and 8 small chains; disulfide-linked. The disulfide link is formed within the large subunit homodimers. Mg(2+) is required as a cofactor. Post-translationally, the disulfide bond which can form in the large chain dimeric partners within the hexadecamer appears to be associated with oxidative stress and protein turnover.

Its subcellular location is the plastid. The protein localises to the chloroplast. The enzyme catalyses 2 (2R)-3-phosphoglycerate + 2 H(+) = D-ribulose 1,5-bisphosphate + CO2 + H2O. The catalysed reaction is D-ribulose 1,5-bisphosphate + O2 = 2-phosphoglycolate + (2R)-3-phosphoglycerate + 2 H(+). In terms of biological role, ruBisCO catalyzes two reactions: the carboxylation of D-ribulose 1,5-bisphosphate, the primary event in carbon dioxide fixation, as well as the oxidative fragmentation of the pentose substrate in the photorespiration process. Both reactions occur simultaneously and in competition at the same active site. The sequence is that of Ribulose bisphosphate carboxylase large chain from Cedrus deodara (Deodar cedar).